We begin with the raw amino-acid sequence, 186 residues long: Probable chorismate pyruvate-lyase (186 aa).

Arg-80, Leu-118, and Glu-170 together coordinate substrate.

Belongs to the UbiC family.

It is found in the cytoplasm. The enzyme catalyses chorismate = 4-hydroxybenzoate + pyruvate. It functions in the pathway cofactor biosynthesis; ubiquinone biosynthesis. Removes the pyruvyl group from chorismate, with concomitant aromatization of the ring, to provide 4-hydroxybenzoate (4HB) for the ubiquinone pathway. This is Probable chorismate pyruvate-lyase from Pseudomonas savastanoi pv. phaseolicola (strain 1448A / Race 6) (Pseudomonas syringae pv. phaseolicola (strain 1448A / Race 6)).